Here is a 264-residue protein sequence, read N- to C-terminus: NADH dehydrogenase [ubiquinone] iron-sulfur protein 3, mitochondrial (264 aa).

Residues 1–36 constitute a mitochondrion transit peptide; the sequence is MAAAAVARLWWRGILGASALTRGTGRPSVLLLPVRR.

It belongs to the complex I 30 kDa subunit family. Core subunit of respiratory chain NADH dehydrogenase (Complex I) which is composed of 45 different subunits. Interacts with NDUFAF3. Interacts with RAB5IF. Found in subcomplexes containing subunits NDUFS2, MT-ND1 and NDUFA13.

Its subcellular location is the mitochondrion inner membrane. It carries out the reaction a ubiquinone + NADH + 5 H(+)(in) = a ubiquinol + NAD(+) + 4 H(+)(out). Functionally, core subunit of the mitochondrial membrane respiratory chain NADH dehydrogenase (Complex I) which catalyzes electron transfer from NADH through the respiratory chain, using ubiquinone as an electron acceptor. Essential for the catalytic activity and assembly of complex I. The polypeptide is NADH dehydrogenase [ubiquinone] iron-sulfur protein 3, mitochondrial (NDUFS3) (Pan troglodytes (Chimpanzee)).